The sequence spans 129 residues: Small ribosomal subunit protein uS11 (129 aa).

Belongs to the universal ribosomal protein uS11 family. As to quaternary structure, part of the 30S ribosomal subunit. Interacts with proteins S7 and S18. Binds to IF-3.

In terms of biological role, located on the platform of the 30S subunit, it bridges several disparate RNA helices of the 16S rRNA. Forms part of the Shine-Dalgarno cleft in the 70S ribosome. The polypeptide is Small ribosomal subunit protein uS11 (Bacillus cereus (strain G9842)).